We begin with the raw amino-acid sequence, 305 residues long: Foldase protein PrsA (305 aa).

The first 19 residues, 1–19, serve as a signal peptide directing secretion; it reads MKKWFIALAGLLLTVTLAG. Residue Cys20 is the site of N-palmitoyl cysteine attachment. A lipid anchor (S-diacylglycerol cysteine) is attached at Cys20. One can recognise a PpiC domain in the interval 136–235; sequence EPEVSVAHIL…YGYHVILMLK (100 aa).

Belongs to the PrsA family.

The protein resides in the cell membrane. The catalysed reaction is [protein]-peptidylproline (omega=180) = [protein]-peptidylproline (omega=0). Functionally, plays a major role in protein secretion by helping the post-translocational extracellular folding of several secreted proteins. This chain is Foldase protein PrsA, found in Levilactobacillus brevis (strain ATCC 367 / BCRC 12310 / CIP 105137 / JCM 1170 / LMG 11437 / NCIMB 947 / NCTC 947) (Lactobacillus brevis).